We begin with the raw amino-acid sequence, 384 residues long: Gastrin-releasing peptide receptor (384 aa).

Topologically, residues 1-38 (MALNDCFLLNLEVDHFMHCNISSHSADLPVNDDWSHPG) are extracellular. N-linked (GlcNAc...) asparagine glycosylation occurs at asparagine 20. Residues 39-62 (ILYVIPAVYGVIILIGLIGNITLI) traverse the membrane as a helical segment. The Cytoplasmic portion of the chain corresponds to 63–76 (KIFCTVKSMRNVPN). A helical transmembrane segment spans residues 77–96 (LFISSLALGDLLLLITCAPV). The Extracellular segment spans residues 97–114 (DASRYLADRWLFGRIGCK). A disulfide bridge connects residues cysteine 113 and cysteine 196. Residues 115 to 136 (LIPFIQLTSVGVSVFTLTALSA) traverse the membrane as a helical segment. Topologically, residues 137–152 (DRYKAIVRPMDIQASH) are cytoplasmic. The chain crosses the membrane as a helical span at residues 153–174 (ALMKICLKAAFIWIISMLLAIP). Residues 175–208 (EAVFSDLHPFHEESTNQTFISCAPYPHSNELHPK) are Extracellular-facing. Residues 209 to 234 (IHSMASFLVFYVIPLSIISVYYYFIA) form a helical membrane-spanning segment. Residues 235 to 264 (KNLIQSAYNLPVEGNIHVKKQIESRKRLAK) lie on the Cytoplasmic side of the membrane. The helical transmembrane segment at 265-285 (TVLVFVGLFAFCWLPNHVIYL) threads the bilayer. Topologically, residues 286–298 (YRSYHYSEVDTSM) are extracellular. The chain crosses the membrane as a helical span at residues 299–325 (LHFVTSICARLLAFTNSCVNPFALYLL). Topologically, residues 326 to 384 (SKSFRKQFNTQLLCCQPGLIIRSHSTGRSTTCMTSLKSTNPSVATFSLINGNICHERYV) are cytoplasmic. Cysteine 339 carries S-palmitoyl cysteine lipidation. Serine 350 carries the post-translational modification Phosphoserine.

This sequence belongs to the G-protein coupled receptor 1 family. As to expression, highly expressed in pancreas. Also expressed in stomach, adrenal cortex and brain. In brain, expressed in cells throughout the cortex.

Its subcellular location is the cell membrane. Receptor for gastrin-releasing peptide (GRP). Signals via association with G proteins that activate a phosphatidylinositol-calcium second messenger system, resulting in Akt phosphorylation. Contributes to the regulation of food intake. Contributes to the perception of prurient stimuli and transmission of itch signals in the spinal cord that promote scratching behavior, but does not play a role in the perception of pain. Contributes primarily to nonhistaminergic itch sensation. In one study, shown to act in the amygdala as part of an inhibitory network which inhibits memory specifically related to learned fear. In another study, shown to contribute to disinhibition of glutamatergic cells in the auditory cortex via signaling on vasoactive intestinal peptide-expressing cells which leads to enhanced auditory fear memories. Contributes to the induction of sighing through signaling in the pre-Botzinger complex, a cluster of several thousand neurons in the ventrolateral medulla responsible for inspiration during respiratory activity. This is Gastrin-releasing peptide receptor (GRPR) from Homo sapiens (Human).